The chain runs to 322 residues: uncharacterized protein (322 aa).

A Radical SAM core domain is found at 34-286 (KFKQKIFKIP…QRLSKDKVPE (253 aa)). Positions 50, 58, and 61 each coordinate [4Fe-4S] cluster.

It belongs to the radical SAM superfamily. It depends on [4Fe-4S] cluster as a cofactor.

This is an uncharacterized protein from Methanocaldococcus jannaschii (strain ATCC 43067 / DSM 2661 / JAL-1 / JCM 10045 / NBRC 100440) (Methanococcus jannaschii).